Reading from the N-terminus, the 232-residue chain is Dof zinc finger protein DOF4.3 (232 aa).

A Dof-type zinc finger spans residues 25 to 79 (RVCARCDSDNTKFCYYNNYSEFQPRYFCKNCRRYWTHGGALRNVPIGGSSRAKRT). Zn(2+) is bound by residues cysteine 27, cysteine 30, cysteine 52, and cysteine 55.

The protein resides in the nucleus. Transcription factor that binds specifically to a 5'-AA[AG]G-3' consensus core sequence. This Arabidopsis thaliana (Mouse-ear cress) protein is Dof zinc finger protein DOF4.3 (DOF4.3).